Reading from the N-terminus, the 194-residue chain is MSFISYISFKGIKMNVISDLELQQIRTQMLTFAQLQVNQADLAEDLVQEAFLSAFKNLANFKRQSAFKTWIFAILKNKIIDYLRQKGRFVLESELEDENTNNSFFDEKGHWKPEYHPSELQGEEETVYSDEFWLIFETCLNCLPAKQAKIFMMREFLELSSEEICQETHLTSSNLHTTLYRARLQLQNCLSKKL.

The Polymerase core binding signature appears at 45-58; it reads DLVQEAFLSAFKNL. A DNA-binding region (H-T-H motif) is located at residues 161 to 180; the sequence is SEEICQETHLTSSNLHTTLY.

The protein belongs to the sigma-70 factor family. ECF subfamily.

The chain is Probable RNA polymerase sigma factor HI_1459 from Haemophilus influenzae (strain ATCC 51907 / DSM 11121 / KW20 / Rd).